We begin with the raw amino-acid sequence, 76 residues long: uncharacterized protein (76 aa).

Positions 1-15 (MYLPLLLFCVISCYG) are cleaved as a signal peptide.

This is an uncharacterized protein from Magallana gigas (Pacific oyster).